The primary structure comprises 243 residues: R-spondin-2 (243 aa).

Positions 1–21 are cleaved as a signal peptide; the sequence is MQFRLFSFALIILNCMDYSHC. Disulfide bonds link cysteine 40-cysteine 46, cysteine 43-cysteine 52, cysteine 55-cysteine 74, cysteine 78-cysteine 93, cysteine 96-cysteine 104, cysteine 101-cysteine 110, cysteine 113-cysteine 124, cysteine 128-cysteine 141, cysteine 145-cysteine 187, cysteine 156-cysteine 163, and cysteine 196-cysteine 203. Residues 90 to 134 form an FU repeat; that stretch reads MNRCARCRIENCDSCFSKDFCTKCKVGFYLHRGRCFDECPDGFAP. The region spanning 144 to 204 is the TSP type-1 domain; it reads GCEVGHWSEW…RCKMTMRHCP (61 aa). Asparagine 160 carries N-linked (GlcNAc...) asparagine glycosylation. A compositionally biased stretch (basic residues) spans 204 to 224; the sequence is PGGKRTPKAKEKRNKKKKRKL. The interval 204–243 is disordered; it reads PGGKRTPKAKEKRNKKKKRKLIERAQEQHSVFLATDRANQ.

It belongs to the R-spondin family. In terms of assembly, interacts with WNT1. Binds heparin. Interacts with LGR4, LGR5 and LGR6. Interacts with E3 ubiquitin ligases RNF43 and ZNRF3.

The protein resides in the secreted. Activator of the canonical Wnt signaling pathway by acting as a ligand for LGR4-6 receptors. Upon binding to LGR4-6 (LGR4, LGR5 or LGR6), LGR4-6 associate with phosphorylated LRP6 and frizzled receptors that are activated by extracellular Wnt receptors, triggering the canonical Wnt signaling pathway to increase expression of target genes. Also regulates the canonical Wnt/beta-catenin-dependent pathway and non-canonical Wnt signaling by acting as an inhibitor of ZNRF3, an important regulator of the Wnt signaling pathway. During embryonic development, plays a crucial role in limb specification, amplifying the Wnt signaling pathway independently of LGR4-6 receptors, possibly by acting as a direct antagonistic ligand to RNF43 and ZNRF3, hence governing the number of limbs an embryo should form. This chain is R-spondin-2 (RSPO2), found in Homo sapiens (Human).